Here is a 256-residue protein sequence, read N- to C-terminus: Chorismate mutase (256 aa).

The Chorismate mutase domain maps to 3-255; it reads FTKPETVLNL…EVEYLLRRLE (253 aa). L-tyrosine is bound by residues Arg75 and Arg76. Residues Asn138, Asn139, Gly141, and Ser142 each contribute to the L-tryptophan site. L-tyrosine-binding residues include Asn139, Gly141, Ser142, and Thr145.

As to quaternary structure, homodimer.

The protein localises to the cytoplasm. The enzyme catalyses chorismate = prephenate. It functions in the pathway metabolic intermediate biosynthesis; prephenate biosynthesis; prephenate from chorismate: step 1/1. With respect to regulation, each dimer has two allosteric binding sites that can bind the regulatory effectors tryptophan or tyrosine. Can bind either one tryptophan or one tyrosine, two tryptophan or two tyrosine or one tryptophan and one tyrosine, which differentially affect the catalytic activity. Activated by tryptophan and subject to feedback inhibition by tyrosine. In the presence of both tryptophan and tyrosine, the enzyme is in the activated state. Catalyzes the Claisen rearrangement of chorismate to prephenate. Acts at the first branch point in the aromatic amino acid pathway where it steers biosynthesis towards phenylalanine and tyrosine, and away from tryptophan. The chain is Chorismate mutase from Saccharomyces cerevisiae (strain ATCC 204508 / S288c) (Baker's yeast).